A 614-amino-acid chain; its full sequence is Beta-glucosidase 33 (614 aa).

The first 26 residues, methionine 1–alanine 26, serve as a signal peptide directing secretion. A beta-D-glucoside is bound by residues glutamine 113, histidine 217, and asparagine 262–glutamate 263. Glutamate 263 (proton donor) is an active-site residue. An intrachain disulfide couples cysteine 282 to cysteine 290. Asparagine 344 is a glycosylation site (N-linked (GlcNAc...) asparagine). An a beta-D-glucoside-binding site is contributed by tyrosine 407. 3 N-linked (GlcNAc...) asparagine glycosylation sites follow: asparagine 419, asparagine 432, and asparagine 439. Glutamate 479 is a binding site for a beta-D-glucoside. The active-site Nucleophile is the glutamate 479. An N-linked (GlcNAc...) asparagine glycan is attached at asparagine 491. Residues tryptophan 529, glutamate 536–tryptophan 537, and phenylalanine 545 contribute to the a beta-D-glucoside site.

The protein belongs to the glycosyl hydrolase 1 family.

The enzyme catalyses Hydrolysis of terminal, non-reducing beta-D-glucosyl residues with release of beta-D-glucose.. This is Beta-glucosidase 33 from Arabidopsis thaliana (Mouse-ear cress).